The primary structure comprises 287 residues: Eukaryotic translation initiation factor 3 subunit G (287 aa).

The segment at 163–207 is disordered; the sequence is EEDLESKEKDTKLGPTVPGSGKYVAPGMRGDRPAVTGGAERRSEE. The region spanning 208-286 is the RRM domain; the sequence is NTCRVTNLPE…LVLKVEWTRF (79 aa).

The protein belongs to the eIF-3 subunit G family. Component of the eukaryotic translation initiation factor 3 (eIF-3) complex.

The protein localises to the cytoplasm. In terms of biological role, RNA-binding component of the eukaryotic translation initiation factor 3 (eIF-3) complex, which is involved in protein synthesis of a specialized repertoire of mRNAs and, together with other initiation factors, stimulates binding of mRNA and methionyl-tRNAi to the 40S ribosome. The eIF-3 complex specifically targets and initiates translation of a subset of mRNAs involved in cell proliferation. This subunit can bind 18S rRNA. The protein is Eukaryotic translation initiation factor 3 subunit G of Brugia malayi (Filarial nematode worm).